The primary structure comprises 303 residues: MLDTKKLTHLKQLEAESIHILREVVAEFDNPVMMYSVGKDSAVMLHLALKAFFPAKLPFPLLHVDTKWKFKEMIEFRDKRAKEEGFELLVHTNPEGIEKNINPFVHGSAVHTDIMKTEGLKQALNKYKFDAVFGGARRDEEKSRAKERIYSFRDKNHRWDPKNQRPELWNLYNSKVHKGESIRVFPLSNWTELDIWQYIYLEGIPIVPLYFAKRRPVIEKDGVKIMVDDERMPIEEHEVVKEEMVRFRTLGCYPLTGAVESSATTLPEIIQEMLLTKTSERQGRMIDNDSSGSMEKKKIEGYF.

This sequence belongs to the PAPS reductase family. CysD subfamily. In terms of assembly, heterodimer composed of CysD, the smaller subunit, and CysN.

It carries out the reaction sulfate + ATP + H(+) = adenosine 5'-phosphosulfate + diphosphate. It participates in sulfur metabolism; hydrogen sulfide biosynthesis; sulfite from sulfate: step 1/3. Functionally, with CysN forms the ATP sulfurylase (ATPS) that catalyzes the adenylation of sulfate producing adenosine 5'-phosphosulfate (APS) and diphosphate, the first enzymatic step in sulfur assimilation pathway. APS synthesis involves the formation of a high-energy phosphoric-sulfuric acid anhydride bond driven by GTP hydrolysis by CysN coupled to ATP hydrolysis by CysD. In Sulfurimonas denitrificans (strain ATCC 33889 / DSM 1251) (Thiomicrospira denitrificans (strain ATCC 33889 / DSM 1251)), this protein is Sulfate adenylyltransferase subunit 2.